Reading from the N-terminus, the 98-residue chain is MFEQRVNSDVLTVSTVNSQAQVTQKPLRDSVKQALKNYFAQLNGQDVSDLYELVLAEVEQPLLDMVMQYTRGNQTRAALMMGINRGTLRKKLKKYGMN.

The segment at residues 74-93 (QTRAALMMGINRGTLRKKLK) is a DNA-binding region (H-T-H motif).

It belongs to the transcriptional regulatory Fis family. Homodimer.

Activates ribosomal RNA transcription. Plays a direct role in upstream activation of rRNA promoters. This Pectobacterium atrosepticum (strain SCRI 1043 / ATCC BAA-672) (Erwinia carotovora subsp. atroseptica) protein is DNA-binding protein Fis.